Here is an 845-residue protein sequence, read N- to C-terminus: Protein P (845 aa).

Positions Met-1–Gln-179 are terminal protein domain (TP). The segment at Glu-180–Arg-348 is spacer. The segment at Gly-226–Arg-246 is disordered. Positions Glu-349–Gln-692 are polymerase/reverse transcriptase domain (RT). The Reverse transcriptase domain occupies Glu-359–Ile-602. The Mg(2+) site is built by Asp-431, Asp-553, and Asp-554.

It belongs to the hepadnaviridae P protein family.

The catalysed reaction is DNA(n) + a 2'-deoxyribonucleoside 5'-triphosphate = DNA(n+1) + diphosphate. The enzyme catalyses Endonucleolytic cleavage to 5'-phosphomonoester.. Activated by host HSP70 and HSP40 in vitro to be able to bind the epsilon loop of the pgRNA. Because deletion of the RNase H region renders the protein partly chaperone-independent, the chaperones may be needed indirectly to relieve occlusion of the RNA-binding site by this domain. Inhibited by several reverse-transcriptase inhibitors: Lamivudine, Adefovir and Entecavir. Its function is as follows. Multifunctional enzyme that converts the viral RNA genome into dsDNA in viral cytoplasmic capsids. This enzyme displays a DNA polymerase activity that can copy either DNA or RNA templates, and a ribonuclease H (RNase H) activity that cleaves the RNA strand of RNA-DNA heteroduplexes in a partially processive 3'- to 5'-endonucleasic mode. Neo-synthesized pregenomic RNA (pgRNA) are encapsidated together with the P protein, and reverse-transcribed inside the nucleocapsid. Initiation of reverse-transcription occurs first by binding the epsilon loop on the pgRNA genome, and is initiated by protein priming, thereby the 5'-end of (-)DNA is covalently linked to P protein. Partial (+)DNA is synthesized from the (-)DNA template and generates the relaxed circular DNA (RC-DNA) genome. After budding and infection, the RC-DNA migrates in the nucleus, and is converted into a plasmid-like covalently closed circular DNA (cccDNA). The activity of P protein does not seem to be necessary for cccDNA generation, and is presumably released from (+)DNA by host nuclear DNA repair machinery. The chain is Protein P from Hepatitis B virus genotype A2 subtype adw2 (isolate Germany/991/1990) (HBV-A).